The sequence spans 602 residues: Elongation factor 4 (602 aa).

The region spanning Ser-7 to Ala-189 is the tr-type G domain. Residues Asp-19–Thr-24 and Asn-136–Asp-139 contribute to the GTP site.

It belongs to the TRAFAC class translation factor GTPase superfamily. Classic translation factor GTPase family. LepA subfamily.

It is found in the cell inner membrane. The enzyme catalyses GTP + H2O = GDP + phosphate + H(+). In terms of biological role, required for accurate and efficient protein synthesis under certain stress conditions. May act as a fidelity factor of the translation reaction, by catalyzing a one-codon backward translocation of tRNAs on improperly translocated ribosomes. Back-translocation proceeds from a post-translocation (POST) complex to a pre-translocation (PRE) complex, thus giving elongation factor G a second chance to translocate the tRNAs correctly. Binds to ribosomes in a GTP-dependent manner. This Gloeobacter violaceus (strain ATCC 29082 / PCC 7421) protein is Elongation factor 4.